Reading from the N-terminus, the 135-residue chain is Large ribosomal subunit protein mL41A (135 aa).

The transit peptide at 1–13 directs the protein to the mitochondrion; it reads MGLISKIARGLVR.

Belongs to the mitochondrion-specific ribosomal protein mL41 family. Component of the mitochondrial ribosome large subunit (39S) which comprises a 16S rRNA and about 50 distinct proteins.

It is found in the mitochondrion. Its function is as follows. Component of the mitochondrial ribosome large subunit. Also involved in apoptosis and cell cycle. This is Large ribosomal subunit protein mL41A (mrpl41-a) from Xenopus laevis (African clawed frog).